The chain runs to 718 residues: Kinesin-like protein KIF2C (718 aa).

The interval 1–248 (MESLPARLFP…CHPLTLTDPT (248 aa)) is globular. 2 positions are modified to phosphoserine: Ser-3 and Ser-19. Residues 86 to 111 (PKQKRRSVNSKIPAPKEGLRSRSTRM) form a disordered region. Position 92 is a phosphoserine; by AURKB (Ser-92). The short motif at 95-98 (SKIP) is the Microtubule tip localization signal element. Phosphoserine is present on residues Ser-106, Ser-108, Ser-112, Ser-163, and Ser-186. The tract at residues 201–232 (EKRAQNSEIRIKRAQEYDSSFPNWEFARMIKE) is negative regulator of microtubule-binding. The region spanning 252-582 (RICVCVRKRP…LRYADRVKEL (331 aa)) is the Kinesin motor domain. ATP-binding positions include Arg-258 and 342-349 (GQTGSGKT). A Nuclear localization signal motif is present at residues 409–412 (KKAK). A phosphoserine mark is found at Ser-513 and Ser-626. Coiled-coil stretches lie at residues 613-651 (NFKE…IIQQ) and 689-716 (ALRE…SKKR).

This sequence belongs to the TRAFAC class myosin-kinesin ATPase superfamily. Kinesin family. MCAK/KIF2 subfamily. Interacts with CENPH. Interacts with MTUS2/TIP150; the interaction is direct. Interacts with MAPRE1; the interaction is direct, regulated by phosphorylation and is probably required for targeting to growing microtubule plus ends. Interacts with KIF18B at microtubule tips; this interaction increases the affinity of both partners for microtubule plus ends and is required for robust microtubule depolymerization. Phosphorylation by AURKA or AURKB strongly reduces KIF18B-binding. Post-translationally, phosphorylation by AURKB, regulates association with centromeres and kinetochores and the microtubule depolymerization activity. Ubiquitinated.

The protein resides in the cytoplasm. Its subcellular location is the cytoskeleton. The protein localises to the nucleus. It is found in the chromosome. It localises to the centromere. The protein resides in the kinetochore. In terms of biological role, in complex with KIF18B, constitutes the major microtubule plus-end depolymerizing activity in mitotic cells. Regulates the turnover of microtubules at the kinetochore and functions in chromosome segregation during mitosis. Plays a role in chromosome congression and is required for the lateral to end-on conversion of the chromosome-microtubule attachment. This is Kinesin-like protein KIF2C (KIF2C) from Cricetulus griseus (Chinese hamster).